The primary structure comprises 270 residues: Interleukin-2 receptor subunit alpha (270 aa).

An N-terminal signal peptide occupies residues 1–21 (MEPSLLMWGFFTFTMIPGCMA). One can recognise a Sushi 1 domain in the interval 22 to 84 (GACVQQPPSL…FWENKCQCMP (63 aa)). Residues 22–245 (GACVQQPPSL…QPIIFTTQYQ (224 aa)) are Extracellular-facing. Disulfide bonds link Cys24-Cys67, Cys49-Cys80, and Cys51-Cys82. N-linked (GlcNAc...) asparagine glycans are attached at residues Asn33 and Asn70. The segment at 87-124 (SPRIPVKQVTPRPEEQKERKTTETQGQMQPPNQANLPG) is disordered. The segment covering 98-108 (RPEEQKERKTT) has biased composition (basic and acidic residues). Over residues 112–121 (GQMQPPNQAN) the composition is skewed to polar residues. In terms of domain architecture, Sushi 2 spans 124 to 191 (GHCKEPPPWE…WTQPKLKCKS (68 aa)). 2 disulfides stabilise this stretch: Cys126/Cys171 and Cys153/Cys189. Residues Asn164 and Asn195 are each glycosylated (N-linked (GlcNAc...) asparagine). The interval 190–225 (KSEKENGSFPEPQMSTAAPPTTKTSLPTRTKGTTDS) is disordered. Polar residues predominate over residues 202-225 (QMSTAAPPTTKTSLPTRTKGTTDS). N-linked (GlcNAc...) asparagine glycosylation is present at Asn227. A helical transmembrane segment spans residues 246–264 (LAVAGCVLLLLSILLLSGL). Over 265–270 (TWQRRR) the chain is Cytoplasmic.

In terms of assembly, non-covalent dimer of an alpha and a beta subunit. IL2R exists in 3 different forms: a high affinity dimer, an intermediate affinity monomer (beta subunit), and a low affinity monomer (alpha subunit). The high and intermediate affinity forms also associate with a gamma subunit.

It localises to the membrane. Receptor for interleukin-2. The receptor is involved in the regulation of immune tolerance by controlling regulatory T cells (TREGs) activity. TREGs suppress the activation and expansion of autoreactive T-cells. The chain is Interleukin-2 receptor subunit alpha (IL2RA) from Sus scrofa (Pig).